The chain runs to 364 residues: Alanine racemase (364 aa).

Lys-35 (proton acceptor; specific for D-alanine) is an active-site residue. The residue at position 35 (Lys-35) is an N6-(pyridoxal phosphate)lysine. Arg-131 is a substrate binding site. Tyr-256 functions as the Proton acceptor; specific for L-alanine in the catalytic mechanism. Met-304 is a substrate binding site.

It belongs to the alanine racemase family. Pyridoxal 5'-phosphate serves as cofactor.

The catalysed reaction is L-alanine = D-alanine. The protein operates within amino-acid biosynthesis; D-alanine biosynthesis; D-alanine from L-alanine: step 1/1. Its function is as follows. Catalyzes the interconversion of L-alanine and D-alanine. May also act on other amino acids. The protein is Alanine racemase (alr) of Chromohalobacter salexigens (strain ATCC BAA-138 / DSM 3043 / CIP 106854 / NCIMB 13768 / 1H11).